The primary structure comprises 484 residues: Chromosomal replication initiator protein DnaA (484 aa).

The segment at 1 to 73 is domain I, interacts with DnaA modulators; it reads MQEGKNIWSL…EILIEKGHST (73 aa). Residues 73-140 are domain II; sequence TINVEFIHSQ…EEIHIKYRNP (68 aa). The tract at residues 141–357 is domain III, AAA+ region; it reads FLKKKYTFEN…AAVTKLKAHI (217 aa). Positions 185, 187, 188, and 189 each coordinate ATP. Residues 358 to 484 are domain IV, binds dsDNA; it reads DLEDIEIDTN…IELMNKINKN (127 aa).

The protein belongs to the DnaA family. In terms of assembly, oligomerizes as a right-handed, spiral filament on DNA at oriC.

It is found in the cytoplasm. Plays an essential role in the initiation and regulation of chromosomal replication. ATP-DnaA binds to the origin of replication (oriC) to initiate formation of the DNA replication initiation complex once per cell cycle. Binds the DnaA box (a 9 base pair repeat at the origin) and separates the double-stranded (ds)DNA. Forms a right-handed helical filament on oriC DNA; dsDNA binds to the exterior of the filament while single-stranded (ss)DNA is stabiized in the filament's interior. The ATP-DnaA-oriC complex binds and stabilizes one strand of the AT-rich DNA unwinding element (DUE), permitting loading of DNA polymerase. After initiation quickly degrades to an ADP-DnaA complex that is not apt for DNA replication. Binds acidic phospholipids. This is Chromosomal replication initiator protein DnaA from Borrelia duttonii (strain Ly).